A 191-amino-acid polypeptide reads, in one-letter code: A-type ATP synthase subunit E (191 aa).

It belongs to the V-ATPase E subunit family. As to quaternary structure, has multiple subunits with at least A(3), B(3), C, D, E, F, H, I and proteolipid K(x).

The protein localises to the cell membrane. Its function is as follows. Component of the A-type ATP synthase that produces ATP from ADP in the presence of a proton gradient across the membrane. This chain is A-type ATP synthase subunit E, found in Methanoregula boonei (strain DSM 21154 / JCM 14090 / 6A8).